Consider the following 252-residue polypeptide: Secreted LysM effector LysM1 (252 aa).

In terms of domain architecture, LysM 1 spans 20 to 64 (FAIPGDPGDTCDTLSDRWGITIDIFKSLNPGVNCPNLVANMEYCV). Positions 71-98 (DTPSTTTTAKPTMTPTSTPTKTTTTSTA) are disordered. Low complexity predominate over residues 72-98 (TPSTTTTAKPTMTPTSTPTKTTTTSTA). LysM domains are found at residues 126–172 (KFHL…YVCV) and 204–250 (KFHL…YVCI).

It belongs to the secreted LysM effector family.

It is found in the secreted. The protein resides in the cell wall. Secreted effector that binds two substrates, chitin and N-linked oligosaccharides associated with human skin glycoproteins. Could provide the pathogen with three important functions including shielding host cell wall chitin from the human immune system, shielding the pathogen's glycoproteins from host degradation and immune surveillance, and helping facilitate pathogen adhesion to human skin. This is Secreted LysM effector LysM1 from Trichophyton rubrum (strain ATCC MYA-4607 / CBS 118892) (Athlete's foot fungus).